Consider the following 345-residue polypeptide: MTDATSNLDSHGRPLGVLRLSLTARCNLACPYCCPDSRDPEGMLDLQDQLRLIRVACSLGVHTVRLTGGEPLLSDRLEPLLAAIALDRPAGLKELALTTNGVLLSPERALRLKCAGLDRITISLDGADAASVARMAGLQGGTPAGQSLLDQVLVGLEAARSAGFNSSHGALKLNAVIQKGRNDDQLIPLARLARDRGLELRLIEYMDVGSRNGWSLAQVMPAMEMVQCVSSHWPLDPVGRSSNSTTSRWRYRDGAGYIGVISSISAPFCGDCNRIRVTADGQVFTCLFASQGVDLRPYLRTDESETQLRECLSELWTRRSDRFSEERSLQIDKEKSHAEMAYLGG.

Positions 10–236 constitute a Radical SAM core domain; sequence SHGRPLGVLR…QCVSSHWPLD (227 aa). Arg19 serves as a coordination point for GTP. [4Fe-4S] cluster is bound by residues Cys26 and Cys30. Tyr32 lines the S-adenosyl-L-methionine pocket. Cys33 is a binding site for [4Fe-4S] cluster. Arg65 is a GTP binding site. Gly69 serves as a coordination point for S-adenosyl-L-methionine. Thr98 serves as a coordination point for GTP. Residue Ser123 coordinates S-adenosyl-L-methionine. Lys172 serves as a coordination point for GTP. Position 206 (Met206) interacts with S-adenosyl-L-methionine. [4Fe-4S] cluster is bound by residues Cys269 and Cys272. 274–276 lines the GTP pocket; that stretch reads RIR. Cys286 serves as a coordination point for [4Fe-4S] cluster.

It belongs to the radical SAM superfamily. MoaA family. In terms of assembly, monomer and homodimer. It depends on [4Fe-4S] cluster as a cofactor.

The enzyme catalyses GTP + AH2 + S-adenosyl-L-methionine = (8S)-3',8-cyclo-7,8-dihydroguanosine 5'-triphosphate + 5'-deoxyadenosine + L-methionine + A + H(+). It functions in the pathway cofactor biosynthesis; molybdopterin biosynthesis. Functionally, catalyzes the cyclization of GTP to (8S)-3',8-cyclo-7,8-dihydroguanosine 5'-triphosphate. The sequence is that of GTP 3',8-cyclase from Synechococcus sp. (strain CC9902).